The primary structure comprises 120 residues: Flagellar protein FliT (120 aa).

A required for homodimerization region spans residues 1–50 (MENLSPLLIEYQGLLKLIRNIKAMALNGLWDDVVEQEIVYIQSIERISQI). A fliD binding region spans residues 60–98 (VQLQFRQLLQDILDTESQVKELLQNRMQELAVLIQQSQN).

This sequence belongs to the FliT family. In terms of assembly, homodimer. Interacts with FliD and FlhC.

The protein resides in the cytoplasm. The protein localises to the cytosol. Its function is as follows. Dual-function protein that regulates the transcription of class 2 flagellar operons and that also acts as an export chaperone for the filament-capping protein FliD. As a transcriptional regulator, acts as an anti-FlhDC factor; it directly binds FlhC, thus inhibiting the binding of the FlhC/FlhD complex to class 2 promoters, resulting in decreased expression of class 2 flagellar operons. As a chaperone, effects FliD transition to the membrane by preventing its premature polymerization, and by directing it to the export apparatus. This is Flagellar protein FliT from Dickeya chrysanthemi (Pectobacterium chrysanthemi).